Reading from the N-terminus, the 504-residue chain is Deoxyguanosinetriphosphate triphosphohydrolase (504 aa).

Residues 66–273 (RLTHSMEVQQ…MEAADDISYC (208 aa)) enclose the HD domain.

The protein belongs to the dGTPase family. Type 1 subfamily. Homotetramer. It depends on Mg(2+) as a cofactor.

It catalyses the reaction dGTP + H2O = 2'-deoxyguanosine + triphosphate + H(+). In terms of biological role, dGTPase preferentially hydrolyzes dGTP over the other canonical NTPs. In Citrobacter koseri (strain ATCC BAA-895 / CDC 4225-83 / SGSC4696), this protein is Deoxyguanosinetriphosphate triphosphohydrolase.